The primary structure comprises 1331 residues: Probable serine/threonine-protein kinase DDB_G0272254 (1331 aa).

3 stretches are compositionally biased toward low complexity: residues 1-42 (METS…NSSS), 96-116 (NDNN…NNNN), and 153-175 (TQQT…STPS). Disordered stretches follow at residues 1–43 (METS…SSSA), 92–132 (DKIC…QQIS), and 150–175 (ILNT…STPS). The next 2 membrane-spanning stretches (helical) occupy residues 201 to 221 (FGFS…IYIL) and 224 to 244 (FVLK…FVIY). The span at 259–287 (SINDSDSSSNNNNNNNNTTTTNNDSASTK) shows a compositional bias: low complexity. Disordered stretches follow at residues 259 to 300 (SIND…PETY), 320 to 419 (NLNN…LSKE), 435 to 464 (SVGK…SHNI), and 512 to 581 (AHSN…VVGN). Residues 288–299 (GNNNNEISSPET) are compositionally biased toward polar residues. Over residues 436-450 (VGKTHNRSSSGSDSI) the composition is skewed to polar residues. The segment covering 514 to 531 (SNNNNNNNNSNTNNNNNN) has biased composition (low complexity). Positions 532 to 555 (QSVSAPVSQLATPVYQTPGTNSVV) are enriched in polar residues. The span at 557 to 577 (NLENDNENNNDSFSDINDNNS) shows a compositional bias: low complexity. 6 Kelch repeats span residues 665-710 (SLVL…NHDY), 716-769 (KFYL…RYGN), 770-816 (RFLL…GHTS), 822-868 (KLII…ELND), 909-959 (NIVM…LIKN), and 962-1008 (KLFI…NNNN). Low complexity predominate over residues 834–860 (NNNNNNNNNNNNNNNNNNNNNNNNNNN). Positions 834–862 (NNNNNNNNNNNNNNNNNNNNNNNNNNNKG) are disordered. Residues 976-1042 (NNNSSSGGNN…NNNNNNNNNN (67 aa)) are disordered. Residues 1073 to 1331 (IKIDKEIGKG…EITNYLTKTF (259 aa)) form the Protein kinase domain. ATP is bound by residues 1079–1087 (IGKGHFSKV) and Lys1100. Asp1200 serves as the catalytic Proton acceptor.

The protein belongs to the protein kinase superfamily. TKL Ser/Thr protein kinase family.

It is found in the membrane. The catalysed reaction is L-seryl-[protein] + ATP = O-phospho-L-seryl-[protein] + ADP + H(+). The enzyme catalyses L-threonyl-[protein] + ATP = O-phospho-L-threonyl-[protein] + ADP + H(+). The polypeptide is Probable serine/threonine-protein kinase DDB_G0272254 (Dictyostelium discoideum (Social amoeba)).